We begin with the raw amino-acid sequence, 669 residues long: DNA ligase (669 aa).

NAD(+)-binding positions include aspartate 34 to aspartate 38, serine 83 to leucine 84, and glutamate 114. Lysine 116 functions as the N6-AMP-lysine intermediate in the catalytic mechanism. NAD(+) contacts are provided by arginine 137, glutamate 171, lysine 287, and lysine 311. Cysteine 405, cysteine 408, cysteine 423, and cysteine 428 together coordinate Zn(2+). Positions asparagine 591–lysine 669 constitute a BRCT domain.

This sequence belongs to the NAD-dependent DNA ligase family. LigA subfamily. The cofactor is Mg(2+). It depends on Mn(2+) as a cofactor.

It catalyses the reaction NAD(+) + (deoxyribonucleotide)n-3'-hydroxyl + 5'-phospho-(deoxyribonucleotide)m = (deoxyribonucleotide)n+m + AMP + beta-nicotinamide D-nucleotide.. Functionally, DNA ligase that catalyzes the formation of phosphodiester linkages between 5'-phosphoryl and 3'-hydroxyl groups in double-stranded DNA using NAD as a coenzyme and as the energy source for the reaction. It is essential for DNA replication and repair of damaged DNA. The sequence is that of DNA ligase from Bacillus cereus (strain ATCC 14579 / DSM 31 / CCUG 7414 / JCM 2152 / NBRC 15305 / NCIMB 9373 / NCTC 2599 / NRRL B-3711).